Consider the following 566-residue polypeptide: Unconventional myosin-VIIa (566 aa).

The region spanning 67-566 (MMEDMIQHLG…AGVVYYESQG (500 aa)) is the Myosin motor domain. 160 to 167 (GESGAGKT) contributes to the ATP binding site.

Belongs to the TRAFAC class myosin-kinesin ATPase superfamily. Myosin family. In terms of assembly, might homodimerize in a two headed molecule through the formation of a coiled-coil rod. Identified in a complex with USH1C and USH1G. Interacts with MYRIP. Interacts with RPE65. Interacts with CIB2. May interact with CALM. Interacts with WHRN. Interacts with PLEKHB1 (via PH domain). Interacts with PCDH15. Interacts with TWF2. Interacts with USH1G. Interacts with MYH9. Interacts (via MyTH4-FERM domains) with cytoplasmic regions of ADGRV1 and USH2A. Interacts with PDZD7 (via MyTH4-FERM domains). Interacts with CALML4.

The protein localises to the cytoplasm. It localises to the cell cortex. It is found in the cytoskeleton. Its subcellular location is the synapse. Functionally, myosins are actin-based motor molecules with ATPase activity. Unconventional myosins serve in intracellular movements. Their highly divergent tails bind to membranous compartments, which are then moved relative to actin filaments. In the retina, plays an important role in the renewal of the outer photoreceptor disks. Plays an important role in the distribution and migration of retinal pigment epithelial (RPE) melanosomes and phagosomes, and in the regulation of opsin transport in retinal photoreceptors. In the inner ear, plays an important role in differentiation, morphogenesis and organization of cochlear hair cell bundles. Motor protein that is a part of the functional network formed by USH1C, USH1G, CDH23 and MYO7A that mediates mechanotransduction in cochlear hair cells. Required for normal hearing. Involved in hair-cell vesicle trafficking of aminoglycosides, which are known to induce ototoxicity. The protein is Unconventional myosin-VIIa (MYO7A) of Sus scrofa (Pig).